The chain runs to 763 residues: C6 finger domain transcription factor hasF (763 aa).

Positions 1-20 are enriched in low complexity; the sequence is MDSTTSSSRFSVSSPQSGPS. The segment at 1–25 is disordered; that stretch reads MDSTTSSSRFSVSSPQSGPSAGIQK. Residues 34-61 constitute a DNA-binding region (zn(2)-C6 fungal-type); it reads CLTCRRRKVKCDHAQPVCTPCQRGGRVC. 3 disordered regions span residues 68 to 91, 112 to 145, and 189 to 219; these read PVSQAPSRVGTGSRVSRTNLRSGQ, GGNMSILPDAKGTSTGSPSDVDQGGNALPNPKCE, and DQSSGAPADSPPSDQPTPPFPFSGSTVESLT. The segment covering 80–89 has biased composition (polar residues); sequence SRVSRTNLRS. Positions 197–209 are enriched in pro residues; sequence DSPPSDQPTPPFP.

The protein localises to the nucleus. Functionally, transcription factor; part of the gene cluster that mediates the biosynthesis of hexadehydro-astechrome (HAS), a tryptophan-derived iron(III)-complex that acts as a virulence factor in infected mice. Does not regulate the expression of the HAS biosynthetic genes (at least under the growth conditions tested). The polypeptide is C6 finger domain transcription factor hasF (Aspergillus fumigatus (strain CBS 144.89 / FGSC A1163 / CEA10) (Neosartorya fumigata)).